Consider the following 447-residue polypeptide: GTPase Era, mitochondrial (447 aa).

The N-terminal 18 residues, 1–18, are a transit peptide targeting the mitochondrion; it reads MTLRSCETFLRRSLRFST. Residues 109–340 form the Era-type G domain; that stretch reads KSLKVAIVGS…RYLFVAAKPC (232 aa). Residues 117–124 are G1; it reads GSPNAGKS. 117 to 124 is a GTP binding site; sequence GSPNAGKS. Positions 143–147 are G2; that stretch reads HTTRS. The interval 164-167 is G3; the sequence is DTPG. GTP-binding positions include 164 to 168 and 233 to 236; these read DTPGL and NKVD. A G4 region spans residues 233 to 236; sequence NKVD. The interval 318-320 is G5; that stretch reads LSS. In terms of domain architecture, KH type-2 spans 370–447; it reads LPKEVPYTMT…RLKISVKLRK (78 aa).

It belongs to the TRAFAC class TrmE-Era-EngA-EngB-Septin-like GTPase superfamily. Era GTPase family.

The protein resides in the mitochondrion matrix. The protein localises to the mitochondrion inner membrane. Its function is as follows. Probable GTPase that plays a role in the mitochondrial ribosomal small subunit assembly. Specifically binds the 12S mitochondrial rRNA (12S mt-rRNA) to a 33 nucleotide section delineating the 3' terminal stem-loop region. May act as a chaperone that protects the 12S mt-rRNA on the 28S mitoribosomal subunit during ribosomal small subunit assembly. This is GTPase Era, mitochondrial (eral1) from Danio rerio (Zebrafish).